Reading from the N-terminus, the 274-residue chain is Diaminopimelate epimerase (274 aa).

Asn-11, Gln-44, and Asn-64 together coordinate substrate. Residue Cys-73 is the Proton donor of the active site. Substrate-binding positions include 74–75, Asn-157, Asn-190, and 208–209; these read GN and ER. The active-site Proton acceptor is the Cys-217. Residue 218-219 coordinates substrate; it reads GS.

It belongs to the diaminopimelate epimerase family. In terms of assembly, homodimer.

The protein localises to the cytoplasm. The catalysed reaction is (2S,6S)-2,6-diaminopimelate = meso-2,6-diaminopimelate. Its pathway is amino-acid biosynthesis; L-lysine biosynthesis via DAP pathway; DL-2,6-diaminopimelate from LL-2,6-diaminopimelate: step 1/1. Catalyzes the stereoinversion of LL-2,6-diaminopimelate (L,L-DAP) to meso-diaminopimelate (meso-DAP), a precursor of L-lysine and an essential component of the bacterial peptidoglycan. In Pasteurella multocida (strain Pm70), this protein is Diaminopimelate epimerase.